A 317-amino-acid chain; its full sequence is uncharacterized protein (317 aa).

The protein to M.avium MAV169.

This is an uncharacterized protein from Mycobacterium tuberculosis (strain CDC 1551 / Oshkosh).